A 397-amino-acid polypeptide reads, in one-letter code: Efflux pump periplasmic linker BepD (397 aa).

A signal peptide spans 1–26 (MTLNRTIRCFAAGAAFIVFAAQPALA). A coiled-coil region spans residues 98-139 (APYQAELEKAQAQVAQAEAQYQQSIRDAERAEQLVQQKVQSA).

It belongs to the membrane fusion protein (MFP) (TC 8.A.1) family. As to quaternary structure, probably part of a tripartite efflux pump, which is composed of an outer membrane efflux protein, an inner membrane protein and a protein that expands the periplasmic space. Could form a tripartite pump with BepC and BepE.

It localises to the periplasm. Involved in resistance to several unrelated toxic compounds, such as dyes, detergents and antibiotics. The sequence is that of Efflux pump periplasmic linker BepD (bepD) from Brucella suis biovar 1 (strain 1330).